The sequence spans 317 residues: Ubiquinone biosynthesis protein COQ9, mitochondrial (317 aa).

The transit peptide at 1-46 directs the protein to the mitochondrion; that stretch reads MAASVARVLKAAGGRQLLLMVARRRPVLRQPFLLMPRKFWGTSALR. Positions 45–97 are disordered; the sequence is LRSEDQKQPPFSSTSAHAGTPEHAEEQYQQQQPPPRYTDQAGEESEGYESEEQ. Residues 85 to 96 are compositionally biased toward acidic residues; the sequence is AGEESEGYESEE. Arg-243 provides a ligand contact to a 1,2-diacylglycero-3-phosphoethanolamine.

This sequence belongs to the COQ9 family. In terms of assembly, homodimer. Heterodimer; two heterodimers of COQ7:COQ9 come together on the same side of the lipid pseudo-bilayer and form a curved tetramer with a hydrophobic surface suitable for membrane interaction. These two tetramers assemble into a soluble octamer with a pseudo-bilayer of lipids captured within. Interacts with COQ7; this interaction allows ubiquinone (CoQ) isoprene intermediates presentation to COQ7 and facilitates the COQ7-mediated hydroxylase step.

Its subcellular location is the mitochondrion. It functions in the pathway cofactor biosynthesis; ubiquinone biosynthesis. Membrane-associated protein that warps the membrane surface to access and bind aromatic isoprenes with high specificity, including ubiquinone (CoQ) isoprene intermediates and presents them directly to COQ7, therefore facilitating the COQ7-mediated hydroxylase step. Participates in the biosynthesis of coenzyme Q, also named ubiquinone, an essential lipid-soluble electron transporter for aerobic cellular respiration. This chain is Ubiquinone biosynthesis protein COQ9, mitochondrial, found in Xenopus tropicalis (Western clawed frog).